A 233-amino-acid chain; its full sequence is Probable tetraheme cytochrome c-type (233 aa).

The first 28 residues, 1-28, serve as a signal peptide directing secretion; the sequence is MTRLQKGSIGTLLTGALLGIVLVAVVFG. Heme-binding residues include Cys-39, Cys-42, Met-45, Cys-67, Cys-70, His-71, Glu-93, Cys-131, Cys-134, His-135, Cys-159, Cys-162, His-163, and His-168. Residues 182–233 form a disordered region; sequence QGKLVLKPEDDGDDEEADEDEDEETEEADDSSDSESASSSDNSDNEDDNNDE. 2 stretches are compositionally biased toward acidic residues: residues 191–214 and 224–233; these read DDGD…DSSD and SDNEDDNNDE.

Belongs to the NapC/NirT/NrfH family. Binds 4 heme groups per subunit.

The protein localises to the periplasm. The sequence is that of Probable tetraheme cytochrome c-type (cycX1) from Nitrosomonas europaea (strain ATCC 19718 / CIP 103999 / KCTC 2705 / NBRC 14298).